The primary structure comprises 73 residues: DNA-directed RNA polymerase subunit omega (73 aa).

This sequence belongs to the RNA polymerase subunit omega family. In terms of assembly, the RNAP catalytic core consists of 2 alpha, 1 beta, 1 beta' and 1 omega subunit. When a sigma factor is associated with the core the holoenzyme is formed, which can initiate transcription.

The enzyme catalyses RNA(n) + a ribonucleoside 5'-triphosphate = RNA(n+1) + diphosphate. Promotes RNA polymerase assembly. Latches the N- and C-terminal regions of the beta' subunit thereby facilitating its interaction with the beta and alpha subunits. This Maridesulfovibrio salexigens (strain ATCC 14822 / DSM 2638 / NCIMB 8403 / VKM B-1763) (Desulfovibrio salexigens) protein is DNA-directed RNA polymerase subunit omega.